The sequence spans 241 residues: Accessory protein p30II (241 aa).

2 consecutive short sequence motifs (nuclear localization signal) follow at residues 73–78 and 91–98; these read RRCRSR and GPRRSRPR. Residues 86 to 153 form a disordered region; it reads AFPPGGPRRS…HRNSPTDTKL (68 aa). Over residues 107 to 138 the composition is skewed to low complexity; sequence PSSTVSSSSLSFNSSSKDNSPSTNSSTSRSSG. Positions 175–184 match the Mitochondrial targeting signal motif; sequence LRVWRLCTRR.

It belongs to the HTLV-1 accessory protein p30II family. As to quaternary structure, p30II binds to the KIX domains of CREBBP and EP300.

The protein localises to the host nucleus. It localises to the host nucleolus. Its subcellular location is the host mitochondrion inner membrane. Functionally, p30II is a multifunctional regulator that sequesters EP300/CREBBP and down-regulates CREB-responsive element (CRE) and Tax-responsive element (TRE) mediated transcription. Specifically binds and represses tax/rex mRNA nuclear export. Since Tax and Rex are positive regulators of viral gene expression, their inhibition by p30II reduces virion production, and allows the virus to escape the host immune surveillance and persist latently in an immune-competent host. In terms of biological role, p13II increases mitochondrial permeability to monovalent cations, producing a rapid, membrane potential-dependent influx of potassium. This could involve a channel-forming activity. Interferes with cell proliferation and transformation and promotes apoptosis induced by ceramide and Fas ligand, probably using the Ras signaling. This is Accessory protein p30II from Human T-cell leukemia virus 1 (isolate Caribbea HS-35 subtype A) (HTLV-1).